The primary structure comprises 158 residues: uncharacterized protein (158 aa).

An N-terminal signal peptide occupies residues 1-16 (MFRPILILTILSCVLA). Asparagine 122 carries N-linked (GlcNAc...) asparagine glycosylation.

This is an uncharacterized protein from Caenorhabditis elegans.